A 440-amino-acid chain; its full sequence is Serine/threonine-protein kinase toxin HipA (440 aa).

The residue at position 150 (S150) is a Phosphoserine; by autocatalysis. Residues 152-157 (AGAQEK), K181, and 234-236 (ERF) contribute to the ATP site. D309 functions as the Proton acceptor in the catalytic mechanism. Residues 311–314 (HAKN) and 331–332 (YD) contribute to the ATP site. The DNA-binding element occupies 379 to 382 (KVLR).

This sequence belongs to the HipA Ser/Thr kinase family. As to quaternary structure, forms a HipA(2)HipB(2) heterotetramer which can interact with a single operator on DNA. When 2 operators are present each HipB dimer contacts 1 HipA molecule, which are brought together by the DNA bend and dimerize, blocking the HipA active site and inactivating its toxic activity. Mutations present in allele hipA7 (G22S and D291A) decrease the affinity of HipA for HipB. Autophosphorylates intermolecularly on Ser-150; phosphorylated form not seen to bind ATP and no longer has kinase activity.

It catalyses the reaction L-seryl-[protein] + ATP = O-phospho-L-seryl-[protein] + ADP + H(+). It carries out the reaction L-threonyl-[protein] + ATP = O-phospho-L-threonyl-[protein] + ADP + H(+). Once phosphorylated no longer has kinase activity. In terms of biological role, toxic component of a type II toxin-antitoxin (TA) system, first identified by mutations that increase production of persister cells, a fraction of cells that are phenotypic variants not killed by antibiotics, which lead to multidrug tolerance. Persistence may be ultimately due to global remodeling of the persister cell's ribosomes. Phosphorylates Glu-tRNA-ligase (AC P04805, gltX, on 'Ser-239') in vivo. Phosphorylation of GltX prevents it from being charged, leading to an increase in uncharged tRNA(Glu). This induces amino acid starvation and the stringent response via RelA/SpoT and increased (p)ppGpp levels, which inhibits replication, transcription, translation and cell wall synthesis, reducing growth and leading to persistence and multidrug resistance. Once the level of HipA exceeds a threshold cells become dormant, and the length of dormancy is determined by how much HipA levels exceed the threshold. The hipA7 mutation (a double G22S D291A mutation) leads to increased generation of persister cells (cells that survive antibiotic treatment) probably by entering into a dormant state, as well as cold-sensitivity. Wild-type cells produce persisters at a frequency of 10(-6) to 10(-5) whereas hipA7 cells produce about 100-fold more persisters. hipA7 decreases the affinity for antitoxin HipB, leading to increased HipA levels and persistence; depending on the protein level, can be toxic enough to reduce cell growth or even kill cells. Generation of persister cells requires (p)ppGpp as cells lacking relA or relA/spoT generate fewer or no persister cells respectively compared to hipA7. The toxic effect of HipA is neutralized by its cognate antitoxin HipB. Also neutralized by overexpression of gltX. With HipB acts as a corepressor for transcription of the hipBA promoter; binding of HipA-HipB to DNA induces a 70 degree bend. This brings together and dimerizes 2 HipA molecules, which distorts the promoter region, preventing sigma-factor binding; additionally HipA and HipB would physically prevent RNA core polymerase from contacting the -35 promoter box. May play a role in biofilm formation. The sequence is that of Serine/threonine-protein kinase toxin HipA (hipA) from Escherichia coli (strain K12).